The chain runs to 437 residues: Chaperone SurA (437 aa).

The N-terminal stretch at 1–22 (MKNWKFPLISTLLLLLTINVHA) is a signal peptide. PpiC domains lie at 173–274 (TVQY…KIDD) and 283–383 (VTEV…EVLE).

Its subcellular location is the periplasm. It carries out the reaction [protein]-peptidylproline (omega=180) = [protein]-peptidylproline (omega=0). Its function is as follows. Chaperone involved in the correct folding and assembly of outer membrane proteins. Recognizes specific patterns of aromatic residues and the orientation of their side chains, which are found more frequently in integral outer membrane proteins. May act in both early periplasmic and late outer membrane-associated steps of protein maturation. This is Chaperone SurA from Aliivibrio fischeri (strain ATCC 700601 / ES114) (Vibrio fischeri).